The chain runs to 690 residues: Eukaryotic translation initiation factor 3 subunit B (690 aa).

Basic and acidic residues predominate over residues 1-11 (MAKKKSEEHSG). The disordered stretch occupies residues 1 to 33 (MAKKKSEEHSGADANDSDYNEEPNFDDPPGYVD). The segment covering 15 to 25 (NDSDYNEEPNF) has biased composition (acidic residues). The region spanning 57–141 (SVVVVDNMPK…YTFAVNLFTD (85 aa)) is the RRM domain. WD repeat units lie at residues 207 to 246 (TRER…KIQK), 292 to 331 (GDGM…LLDL), 334 to 369 (IKIA…TLME), 442 to 484 (EIRE…KPSL), and 530 to 575 (PDHF…IRRT). The stretch at 613-646 (EQKDRLRLTRASKELLEKRAQLRETFMEYRNKRI) forms a coiled coil.

This sequence belongs to the eIF-3 subunit B family. Component of the eukaryotic translation initiation factor 3 (eIF-3) complex. The eIF-3 complex interacts with pix. Interacts with mxt.

Its subcellular location is the cytoplasm. Its function is as follows. RNA-binding component of the eukaryotic translation initiation factor 3 (eIF-3) complex, which is involved in protein synthesis of a specialized repertoire of mRNAs and, together with other initiation factors, stimulates binding of mRNA and methionyl-tRNAi to the 40S ribosome. The eIF-3 complex specifically targets and initiates translation of a subset of mRNAs involved in cell proliferation. This Drosophila mojavensis (Fruit fly) protein is Eukaryotic translation initiation factor 3 subunit B.